Here is a 497-residue protein sequence, read N- to C-terminus: Cytochrome P450 71A14 (497 aa).

Residues 3–23 (MIIISLCLATILALLLLKQFL) traverse the membrane as a helical segment. Cys440 is a binding site for heme.

This sequence belongs to the cytochrome P450 family. Requires heme as cofactor.

Its subcellular location is the membrane. The polypeptide is Cytochrome P450 71A14 (CYP71A14) (Arabidopsis thaliana (Mouse-ear cress)).